A 76-amino-acid polypeptide reads, in one-letter code: Cytochrome c oxidase subunit 6C-1 (76 aa).

Topologically, residues 4–14 (GALLPKPQMHD) are mitochondrial matrix. A helical transmembrane segment spans residues 15–55 (PLSKRLWVHIVGAFIVDLGVAAAHKFGAAKPRKKAYADFYR). At 56–76 (NHDPMKDFDEMRKAGVFRSVK) the chain is on the mitochondrial intermembrane side.

The protein belongs to the cytochrome c oxidase subunit 6c family. Component of the cytochrome c oxidase (complex IV, CIV), a multisubunit enzyme composed of 14 subunits. The complex is composed of a catalytic core of 3 subunits MT-CO1, MT-CO2 and MT-CO3, encoded in the mitochondrial DNA, and 11 supernumerary subunits COX4I, COX5A, COX5B, COX6A, COX6B, COX6C, COX7A, COX7B, COX7C, COX8 and NDUFA4, which are encoded in the nuclear genome. The complex exists as a monomer or a dimer and forms supercomplexes (SCs) in the inner mitochondrial membrane with NADH-ubiquinone oxidoreductase (complex I, CI) and ubiquinol-cytochrome c oxidoreductase (cytochrome b-c1 complex, complex III, CIII), resulting in different assemblies (supercomplex SCI(1)III(2)IV(1) and megacomplex MCI(2)III(2)IV(2)).

Its subcellular location is the mitochondrion inner membrane. The protein operates within energy metabolism; oxidative phosphorylation. Its function is as follows. Component of the cytochrome c oxidase, the last enzyme in the mitochondrial electron transport chain which drives oxidative phosphorylation. The respiratory chain contains 3 multisubunit complexes succinate dehydrogenase (complex II, CII), ubiquinol-cytochrome c oxidoreductase (cytochrome b-c1 complex, complex III, CIII) and cytochrome c oxidase (complex IV, CIV), that cooperate to transfer electrons derived from NADH and succinate to molecular oxygen, creating an electrochemical gradient over the inner membrane that drives transmembrane transport and the ATP synthase. Cytochrome c oxidase is the component of the respiratory chain that catalyzes the reduction of oxygen to water. Electrons originating from reduced cytochrome c in the intermembrane space (IMS) are transferred via the dinuclear copper A center (CU(A)) of subunit 2 and heme A of subunit 1 to the active site in subunit 1, a binuclear center (BNC) formed by heme A3 and copper B (CU(B)). The BNC reduces molecular oxygen to 2 water molecules using 4 electrons from cytochrome c in the IMS and 4 protons from the mitochondrial matrix. In Rattus norvegicus (Rat), this protein is Cytochrome c oxidase subunit 6C-1 (Cox6c1).